An 888-amino-acid chain; its full sequence is MGRVPLAWWLALCCWGCAAHKDTQTEAGSPFVGNPGNITGARGLTGTLRCELQVQGEPPEVVWLRDGQILELADNTQTQVPLGEDWQDEWKVVSQLRISALQLSDAGEYQCMVHLEGRTFVSQPGFVGLEGLPYFLEEPEDKAVPANTPFNLSCQAQGPPEPVTLLWLQDAVPLAPVTGHSSQHSLQTPGLNKTSSFSCEAHNAKGVTTSRTATITVLPQRPHHLHVVSRQPTELEVAWTPGLSGIYPLTHCNLQAVLSDDGVGIWLGKSDPPEDPLTLQVSVPPHQLRLEKLLPHTPYHIRISCSSSQGPSPWTHWLPVETTEGVPLGPPENVSAMRNGSQVLVRWQEPRVPLQGTLLGYRLAYRGQDTPEVLMDIGLTREVTLELRGDRPVANLTVSVTAYTSAGDGPWSLPVPLEPWRPGQGQPLHHLVSEPPPRAFSWPWWYVLLGALVAAACVLILALFLVHRRKKETRYGEVFEPTVERGELVVRYRVRKSYSRRTTEATLNSLGISEELKEKLRDVMVDRHKVALGKTLGEGEFGAVMEGQLNQDDSILKVAVKTMKIAICTRSELEDFLSEAVCMKEFDHPNVMRLIGVCFQGSDREGFPEPVVILPFMKHGDLHSFLLYSRLGDQPVFLPTQMLVKFMADIASGMEYLSTKRFIHRDLAARNCMLNENMSVCVADFGLSKKIYNGDYYRQGRIAKMPVKWIAIESLADRVYTSKSDVWSFGVTMWEIATRGQTPYPGVENSEIYDYLRQGNRLKQPVDCLDGLYALMSRCWELNPRDRPSFAELREDLENTLKALPPAQEPDEILYVNMDEGGSHLEPRGAAGGADPPTQPDPKDSCSCLTAADVHSAGRYVLCPSTAPGPTLSADRGCPAPPGQEDGA.

The signal sequence occupies residues methionine 1–alanine 18. The interval alanine 19–tryptophan 86 is interaction with GAS6. At alanine 19–tryptophan 445 the chain is on the extracellular side. Ig-like C2-type domains lie at proline 30 to serine 122 and proline 133 to threonine 216. N-linked (GlcNAc...) asparagine glycosylation occurs at asparagine 37. An intrachain disulfide couples cysteine 50 to cysteine 111. N-linked (GlcNAc...) asparagine glycosylation is found at asparagine 151 and asparagine 192. Cysteines 154 and 199 form a disulfide. Fibronectin type-III domains lie at arginine 221 to glycine 325 and proline 330 to proline 422. 3 N-linked (GlcNAc...) asparagine glycosylation sites follow: asparagine 333, asparagine 339, and asparagine 395. The chain crosses the membrane as a helical span at residues tyrosine 446–valine 466. The Cytoplasmic segment spans residues histidine 467–alanine 888. A Protein kinase domain is found at valine 530–leucine 801. ATP is bound by residues leucine 536–valine 544 and lysine 561. Aspartate 666 functions as the Proton acceptor in the catalytic mechanism. Tyrosine 697, tyrosine 773, and tyrosine 815 each carry phosphotyrosine; by autocatalysis. The interval glutamate 820 to cysteine 846 is disordered. Tyrosine 860 carries the phosphotyrosine; by autocatalysis modification. The disordered stretch occupies residues serine 865–alanine 888.

This sequence belongs to the protein kinase superfamily. Tyr protein kinase family. AXL/UFO subfamily. Heterodimer and heterotetramer with ligand GAS6. Interacts with CBL, GRB2, LCK, NCK2, PIK3R1, PIK3R2, PIK3R3, PLCG1, SOCS1 and TNS2. Part of a complex including AXL, TNK2 and GRB2, in which GRB2 promotes AXL recruitment by TNK2. Post-translationally, monoubiquitinated upon GAS6-binding. A very small proportion of the receptor could be subjected to polyubiquitination in a very transient fashion. In terms of processing, phosphorylated at tyrosine residues by autocatalysis, which activates kinase activity. In distinct substructures of a broad spectrum of developing tissues (in the late embryogenesis). In cells forming organ capsules as well as in connective tissue structures (in adult).

The protein localises to the cell membrane. It carries out the reaction L-tyrosyl-[protein] + ATP = O-phospho-L-tyrosyl-[protein] + ADP + H(+). Activated by GAS6-binding and subsequent autophosphorylation. Its function is as follows. Receptor tyrosine kinase that transduces signals from the extracellular matrix into the cytoplasm by binding growth factor GAS6 and which is thus regulating many physiological processes including cell survival, cell proliferation, migration and differentiation. Ligand binding at the cell surface induces dimerization and autophosphorylation of AXL. Following activation by ligand, AXL binds and induces tyrosine phosphorylation of PI3-kinase subunits PIK3R1, PIK3R2 and PIK3R3; but also GRB2, PLCG1, LCK and PTPN11. Other downstream substrate candidates for AXL are CBL, NCK2, SOCS1 and TNS2. Recruitment of GRB2 and phosphatidylinositol 3 kinase regulatory subunits by AXL leads to the downstream activation of the AKT kinase. GAS6/AXL signaling plays a role in various processes such as endothelial cell survival during acidification by preventing apoptosis, optimal cytokine signaling during human natural killer cell development, hepatic regeneration, gonadotropin-releasing hormone neuron survival and migration, platelet activation, or regulation of thrombotic responses. Also plays an important role in inhibition of Toll-like receptors (TLRs)-mediated innate immune response. This Mus musculus (Mouse) protein is Tyrosine-protein kinase receptor UFO (Axl).